Consider the following 102-residue polypeptide: Small ribosomal subunit protein uS10 (102 aa).

Belongs to the universal ribosomal protein uS10 family. Part of the 30S ribosomal subunit.

Functionally, involved in the binding of tRNA to the ribosomes. The chain is Small ribosomal subunit protein uS10 from Myxococcus xanthus (strain DK1622).